The following is a 358-amino-acid chain: Cytochrome c peroxidase, mitochondrial (358 aa).

The transit peptide at 1–38 (MAASRTATRTLRALRTSTRPALTAAPRAAFRQGGRRLY) directs the protein to the mitochondrion. Catalysis depends on H119, which acts as the Proton acceptor. A disordered region spans residues 192–214 (PYRPGRQDRDAAGCTPDGRLPDA). H242 provides a ligand contact to heme b. Residue W258 is the Tryptophan radical intermediate of the active site.

Belongs to the peroxidase family. Cytochrome c peroxidase subfamily. In terms of assembly, forms a one-to-one complex with cytochrome c. The cofactor is heme b.

The protein resides in the mitochondrion matrix. Its subcellular location is the mitochondrion intermembrane space. It carries out the reaction 2 Fe(II)-[cytochrome c] + H2O2 + 2 H(+) = 2 Fe(III)-[cytochrome c] + 2 H2O. Its function is as follows. Destroys radicals which are normally produced within the cells and which are toxic to biological systems. In Neurospora crassa (strain ATCC 24698 / 74-OR23-1A / CBS 708.71 / DSM 1257 / FGSC 987), this protein is Cytochrome c peroxidase, mitochondrial (ccp-1).